Consider the following 290-residue polypeptide: L-fucono-1,5-lactonase (290 aa).

The protein belongs to the metallo-dependent hydrolases superfamily.

The catalysed reaction is L-fucono-1,5-lactone + H2O = L-fuconate + H(+). The enzyme catalyses L-fucono-1,4-lactone + H2O = L-fuconate + H(+). It catalyses the reaction D-arabinono-1,4-lactone + H2O = D-arabinonate + H(+). It carries out the reaction L-xylono-1,4-lactone + H2O = L-xylonate + H(+). The catalysed reaction is L-galactono-1,4-lactone + H2O = L-galactonate + H(+). Catalyzes the hydrolysis of L-fucono-1,5-lactone to L-fuconate. Can also hydrolyze L-fucono-1,4-lactone, L-galactono-1,4-lactone D-arabinono-1,4-lactone and L-xylono-1,4-lactone. In Burkholderia ambifaria (strain ATCC BAA-244 / DSM 16087 / CCUG 44356 / LMG 19182 / AMMD) (Burkholderia cepacia (strain AMMD)), this protein is L-fucono-1,5-lactonase.